The sequence spans 341 residues: Phenylalanine--tRNA ligase alpha subunit (341 aa).

Residue Glu256 participates in Mg(2+) binding.

Belongs to the class-II aminoacyl-tRNA synthetase family. Phe-tRNA synthetase alpha subunit type 1 subfamily. Tetramer of two alpha and two beta subunits. Mg(2+) serves as cofactor.

It is found in the cytoplasm. The catalysed reaction is tRNA(Phe) + L-phenylalanine + ATP = L-phenylalanyl-tRNA(Phe) + AMP + diphosphate + H(+). The sequence is that of Phenylalanine--tRNA ligase alpha subunit from Chlamydia abortus (strain DSM 27085 / S26/3) (Chlamydophila abortus).